A 935-amino-acid polypeptide reads, in one-letter code: MSDYKDTLNLPKTSFSMKGNLANKEPMILNKWEKQGIYKKIREHFAGREKFVLHDGPPYANGSIHVGHAVNKILKDIIIKSKTLSGYDAPFTPTWDCHGLPIELQVEKKHGKAGQSISEDDFRKECRKYAKKQVEIQKKDFKRLGVLGDWEQPYLTINFDYEANMIRTLAKIIENGHLSKGFKPVHWCTDCGSALAEAEVEYADKVSPAIDVKFKIKDKDKLAQAFGLDSLNHDAFAIIWTTTPWTLPANQAIAVNNQLNYSLIKIEDFYIILAENLVEQTLKRYAIENAQIIATTTGNKLTGIMAEHPFYSRHVPILHGDHVTDDSGTGLVHTAPTHGVDDFTLGKEHNLSMEIFVKGNGCYSENTKLFAGEFIFKANDRIIELLGEKKRLMNSDKIKHSYPHCWRHKTPLMFRATPQWFISMEKQGLRDKALQAIKETSWAPSWGQARIEGMVKDRPDWCISRQRTWGVPLPLFIHKETEELHPNTIEILHKVAEKIEKDGIEAWFNADDCEFITETAQYKSVKDTLDVWFDSGSSSMCILDLDKRLSYPADLYLEGSDQHRGWFQTSLLVAMSAKGSQPYKEVFTHGFVVDEHGRKMSKSLGNVTSPQDIYNTLGADILRLWTASTDYKSEMAVSDQILKRTADTYRRLRNTARFLLSNLDGFNPVTDIIEFDKLVKLDQWAIAKTKEFQDKIIEVYDKYQTHTVAQLIHHFCSIEMGSFYLDIIKDRQYTAKTDGHPRKSAQTAIYHIVHALVRWMAPILSFTADEIWDATPKTTDLPIQLCEWYTGLKSFDQDAELDLEYWAKIQEIRSEVNRVLEIKRNEDVIKASLEAEITIYADKYNYNLLEKLGNELRFLLISSKADLKVIEESTSSSIAANIPGLLIEITKIEEPKCERCWHRSSTVGDNPQYKDICSRCVENITTEAGESREFA.

The 'HIGH' region motif lies at 58-68 (PYANGSIHVGH). An L-isoleucyl-5'-AMP-binding site is contributed by E558. Residues 599 to 603 (KMSKS) carry the 'KMSKS' region motif. Residue K602 participates in ATP binding. Residues C897, C900, C917, and C920 each contribute to the Zn(2+) site.

It belongs to the class-I aminoacyl-tRNA synthetase family. IleS type 1 subfamily. Monomer. Requires Zn(2+) as cofactor.

It is found in the cytoplasm. It catalyses the reaction tRNA(Ile) + L-isoleucine + ATP = L-isoleucyl-tRNA(Ile) + AMP + diphosphate. Functionally, catalyzes the attachment of isoleucine to tRNA(Ile). As IleRS can inadvertently accommodate and process structurally similar amino acids such as valine, to avoid such errors it has two additional distinct tRNA(Ile)-dependent editing activities. One activity is designated as 'pretransfer' editing and involves the hydrolysis of activated Val-AMP. The other activity is designated 'posttransfer' editing and involves deacylation of mischarged Val-tRNA(Ile). The protein is Isoleucine--tRNA ligase of Francisella tularensis subsp. tularensis (strain SCHU S4 / Schu 4).